A 445-amino-acid polypeptide reads, in one-letter code: Lateral flagellar hook-associated protein 2 (445 aa).

Residues 388 to 423 (SGAFKSRKEALQANLDRLSDKQTTLERKYDMSYKRY) are a coiled coil.

This sequence belongs to the FliD family. Homopentamer.

It localises to the secreted. The protein resides in the bacterial flagellum. Its function is as follows. Required for the morphogenesis and for the elongation of the flagellar filament by facilitating polymerization of the flagellin monomers at the tip of growing filament. Forms a capping structure, which prevents flagellin subunits (transported through the central channel of the flagellum) from leaking out without polymerization at the distal end. Essential for swarming motility. The sequence is that of Lateral flagellar hook-associated protein 2 (fliDL) from Vibrio parahaemolyticus serotype O3:K6 (strain RIMD 2210633).